Consider the following 293-residue polypeptide: 4-diphosphocytidyl-2-C-methyl-D-erythritol kinase (293 aa).

Lys-16 is a catalytic residue. 99-109 contributes to the ATP binding site; sequence PMGAGLGGGSS. Asp-141 is an active-site residue.

The protein belongs to the GHMP kinase family. IspE subfamily.

It catalyses the reaction 4-CDP-2-C-methyl-D-erythritol + ATP = 4-CDP-2-C-methyl-D-erythritol 2-phosphate + ADP + H(+). Its pathway is isoprenoid biosynthesis; isopentenyl diphosphate biosynthesis via DXP pathway; isopentenyl diphosphate from 1-deoxy-D-xylulose 5-phosphate: step 3/6. In terms of biological role, catalyzes the phosphorylation of the position 2 hydroxy group of 4-diphosphocytidyl-2C-methyl-D-erythritol. The chain is 4-diphosphocytidyl-2-C-methyl-D-erythritol kinase from Burkholderia pseudomallei (strain 668).